Here is a 756-residue protein sequence, read N- to C-terminus: Receptor-like protein 3 (756 aa).

An N-terminal signal peptide occupies residues 1–50; the sequence is MTNEGRFKAKGFVRTSSTTRPIQALSFHMIGILLQCVLFISVLSIAVSEA. Residues 51 to 88 form an N-cap region; that stretch reads LCNSQDRESLLWFSGNVSSSVSPLNWNPSIDCCSWEGI. The Extracellular portion of the chain corresponds to 51-725; sequence LCNSQDRESL…ADTEDEEELK (675 aa). Residue asparagine 66 is glycosylated (N-linked (GlcNAc...) asparagine). LRR repeat units follow at residues 95-119, 120-143, 145-169, 174-199, 201-225, 226-250, 252-274, 275-298, 299-322, 323-346, 348-370, 371-395, 397-419, 420-443, 445-471, 474-498, 499-521, and 522-546; these read DSHI…VLRL, HHLS…FLSA, DQLK…TFRN, CFPI…IFMQ, TFDL…MCKS, SPQL…LGRC, KLSV…IYNL, SELE…ITHL, TKLK…IGQL, SRLQ…LANC, NLVK…DFSR, FQSL…VHSC, SLSA…VLEL, ESLS…GILQ, CRNL…LISS, FPNL…LIKL, KSLA…WLGT, and FPHL…LFQL. 2 N-linked (GlcNAc...) asparagine glycosylation sites follow: asparagine 126 and asparagine 169. Asparagine 208 carries N-linked (GlcNAc...) asparagine glycosylation. N-linked (GlcNAc...) asparagine glycans are attached at residues asparagine 262 and asparagine 273. Asparagine 334 and asparagine 345 each carry an N-linked (GlcNAc...) asparagine glycan. N-linked (GlcNAc...) asparagine glycosylation occurs at asparagine 381. N-linked (GlcNAc...) asparagine glycans are attached at residues asparagine 434, asparagine 447, and asparagine 459. Residues 548 to 569 form an LRR 19; degenerate repeat; it reads ALMSQKAYDATERNYLKLPVFV. LRR repeat units follow at residues 570-593, 608-631, 632-656, and 658-681; these read SPNN…IYIR, LKVL…ELSK, LTSL…LTSL, and YMSY…QFDT. N-linked (GlcNAc...) asparagine glycosylation is present at asparagine 573. Asparagine 666 carries an N-linked (GlcNAc...) asparagine glycan. The interval 699–725 is C-cap/acidic domain; the sequence is LTSCKASTKLPATTTNKADTEDEEELK. The helical transmembrane segment at 726–746 threads the bilayer; that stretch reads FIFILGVATGFFVSYCFYWCF. The Cytoplasmic segment spans residues 747-756; the sequence is FARLDAFISK.

This sequence belongs to the RLP family. In terms of tissue distribution, expressed at very low levels in the shoot apex.

Its subcellular location is the cell membrane. Involved in the perception of CLV3 and CLV3-like peptides, that act as extracellular signals regulating meristems maintenance. Contributes, with WAKL22/RFO1, to resistance to F.oxysporum (f.) matthioli in cv. Columbia relative to cv. Ty-0. This chain is Receptor-like protein 3, found in Arabidopsis thaliana (Mouse-ear cress).